The sequence spans 202 residues: Ribonuclease HII (202 aa).

The region spanning 1–195 (MIVAGVDEVG…PELKGGSPAG (195 aa)) is the RNase H type-2 domain. Residues Asp7, Glu8, and Asp103 each coordinate a divalent metal cation.

The protein belongs to the RNase HII family. The cofactor is Mn(2+). It depends on Mg(2+) as a cofactor.

It localises to the cytoplasm. The catalysed reaction is Endonucleolytic cleavage to 5'-phosphomonoester.. Its function is as follows. Endonuclease that specifically degrades the RNA of RNA-DNA hybrids. This Synechococcus sp. (strain RCC307) protein is Ribonuclease HII.